Here is a 128-residue protein sequence, read N- to C-terminus: Ribonuclease P protein component (128 aa).

Belongs to the RnpA family. Consists of a catalytic RNA component (M1 or rnpB) and a protein subunit.

The catalysed reaction is Endonucleolytic cleavage of RNA, removing 5'-extranucleotides from tRNA precursor.. In terms of biological role, RNaseP catalyzes the removal of the 5'-leader sequence from pre-tRNA to produce the mature 5'-terminus. It can also cleave other RNA substrates such as 4.5S RNA. The protein component plays an auxiliary but essential role in vivo by binding to the 5'-leader sequence and broadening the substrate specificity of the ribozyme. This is Ribonuclease P protein component from Synechococcus sp. (strain CC9902).